Consider the following 263-residue polypeptide: Gap junction beta-6 protein (263 aa).

Topologically, residues 1–19 (MDWGALQTILGGVNKHSTS) are cytoplasmic. The helical transmembrane segment at 20–40 (IGKIWLTVLFIFRIMILVVAA) threads the bilayer. Residues 41–75 (ERVWGDEQDDFICNTLQPGCKNVCYDHFFPISHIR) are Extracellular-facing. The helical transmembrane segment at 76 to 96 (LWALQLIFVSTPALLVAMHVA) threads the bilayer. At 97–137 (YRRHEKKRQFRKGDQKCEYKDIEEIRTQRFRIEGTLWWTYT) the chain is on the cytoplasmic side. The helical transmembrane segment at 138–158 (CSIFFRLVFEAVFMYAFYFMY) threads the bilayer. At 159–189 (DGFRMPRLMKCSAWPCPNTVDCFVSRPTEKT) the chain is on the extracellular side. Residues 190 to 210 (VFTIFMIAVSSICILLNVAEL) traverse the membrane as a helical segment. Topologically, residues 211 to 263 (CYLLTKFFLRRSRKAGNQKHHPNHENKEETKQNEMNELISDSCQNTVIGFTSS) are cytoplasmic.

This sequence belongs to the connexin family. Beta-type (group I) subfamily. In terms of assembly, a connexon is composed of a hexamer of connexins. As to expression, exclusively expressed in the cochlea of the inner ear, where it is found in cells of the tegmentum vasculosum, cuboidal cells, supporting cells and clear cells.

The protein resides in the cell membrane. The protein localises to the cell junction. It localises to the gap junction. Functionally, one gap junction consists of a cluster of closely packed pairs of transmembrane channels, the connexons, through which materials of low MW diffuse from one cell to a neighboring cell. The protein is Gap junction beta-6 protein (GJB6) of Gallus gallus (Chicken).